The sequence spans 678 residues: Secretin ExeD (678 aa).

The N-terminal stretch at 1–25 is a signal peptide; that stretch reads MINKGKGWRLATVAAALMMAGSAWA. An N0 region spans residues 26 to 122; that stretch reads TEYSASFKNA…VVDETNPGIG (97 aa). Positions 124-188 are N1; the sequence is EMVTRVVPVR…EVVRRVDKAG (65 aa). An N2 region spans residues 189 to 264; it reads DQEVDIIKLK…MVRQLDRDLQ (76 aa). The segment at 267–348 is N3; sequence GNTRVFYLKY…ELEQVVAKLD (82 aa). Residues 353 to 602 are secretin; sequence QVLVEAIIVE…VFIRPTILRD (250 aa). Positions 604–678 are s domain; it reads NVYSGISSNK…GVQPFVQGNK (75 aa).

Belongs to the bacterial secretin family. GSP D subfamily. In terms of assembly, forms a cylindrical channel with 15 subunits.

The protein resides in the cell outer membrane. Involved in a type II secretion system (T2SS, formerly general secretion pathway, GSP) for the export of proteins. This subunit forms the outer membrane channel. The protein is Secretin ExeD (exeD) of Aeromonas hydrophila.